The sequence spans 374 residues: UPF0674 endoplasmic reticulum membrane protein C2G5.01 (374 aa).

Residues 49 to 68 form a helical membrane-spanning segment; the sequence is FRLEFVILACFFLYVFSFIT. The N-linked (GlcNAc...) asparagine glycan is linked to Asn287. Residues 335-374 are disordered; sequence KAAKKKVKSSGDISKLSESDQKKRMERERQRKMRRRAKKM. Over residues 349 to 363 the composition is skewed to basic and acidic residues; that stretch reads KLSESDQKKRMERER. Positions 364 to 374 are enriched in basic residues; sequence QRKMRRRAKKM.

Belongs to the UPF0674 family.

The protein localises to the endoplasmic reticulum membrane. This is UPF0674 endoplasmic reticulum membrane protein C2G5.01 from Schizosaccharomyces pombe (strain 972 / ATCC 24843) (Fission yeast).